The following is a 470-amino-acid chain: UDP-N-acetylmuramate--L-alanine ligase (470 aa).

118 to 124 contributes to the ATP binding site; it reads GTHGKTT.

The protein belongs to the MurCDEF family.

It localises to the cytoplasm. It catalyses the reaction UDP-N-acetyl-alpha-D-muramate + L-alanine + ATP = UDP-N-acetyl-alpha-D-muramoyl-L-alanine + ADP + phosphate + H(+). Its pathway is cell wall biogenesis; peptidoglycan biosynthesis. Its function is as follows. Cell wall formation. The protein is UDP-N-acetylmuramate--L-alanine ligase of Cereibacter sphaeroides (strain ATCC 17029 / ATH 2.4.9) (Rhodobacter sphaeroides).